The following is a 206-amino-acid chain: Dephospho-CoA kinase (206 aa).

Positions 4 to 204 constitute a DPCK domain; the sequence is VIGLTGGIAS…EGYIESHSED (201 aa). Residue 12–17 coordinates ATP; it reads ASGKST.

The protein belongs to the CoaE family.

The protein localises to the cytoplasm. The enzyme catalyses 3'-dephospho-CoA + ATP = ADP + CoA + H(+). It functions in the pathway cofactor biosynthesis; coenzyme A biosynthesis; CoA from (R)-pantothenate: step 5/5. Functionally, catalyzes the phosphorylation of the 3'-hydroxyl group of dephosphocoenzyme A to form coenzyme A. The polypeptide is Dephospho-CoA kinase (Staphylococcus saprophyticus subsp. saprophyticus (strain ATCC 15305 / DSM 20229 / NCIMB 8711 / NCTC 7292 / S-41)).